A 734-amino-acid polypeptide reads, in one-letter code: Ribosomal RNA large subunit methyltransferase K/L (734 aa).

In terms of domain architecture, THUMP spans 49 to 167 (HAYRICMWSR…KTEHTYCLDL (119 aa)).

The protein belongs to the methyltransferase superfamily. RlmKL family.

The protein localises to the cytoplasm. It catalyses the reaction guanosine(2445) in 23S rRNA + S-adenosyl-L-methionine = N(2)-methylguanosine(2445) in 23S rRNA + S-adenosyl-L-homocysteine + H(+). The catalysed reaction is guanosine(2069) in 23S rRNA + S-adenosyl-L-methionine = N(2)-methylguanosine(2069) in 23S rRNA + S-adenosyl-L-homocysteine + H(+). Its function is as follows. Specifically methylates the guanine in position 2445 (m2G2445) and the guanine in position 2069 (m7G2069) of 23S rRNA. The sequence is that of Ribosomal RNA large subunit methyltransferase K/L from Acinetobacter baumannii (strain SDF).